Consider the following 167-residue polypeptide: Small heat shock protein C1 (167 aa).

The sHSP domain maps to Pro59–Asn167.

Belongs to the small heat shock protein (HSP20) family.

This Rickettsia felis (strain ATCC VR-1525 / URRWXCal2) (Rickettsia azadi) protein is Small heat shock protein C1 (hspC1).